Consider the following 162-residue polypeptide: Large ribosomal subunit protein uL15 (162 aa).

The disordered stretch occupies residues 1 to 41; that stretch reads MKLSDIADNAGSRKKRMRVGRGIGSGKGKTAGRGGKGQTAR. Positions 21–37 are enriched in gly residues; it reads RGIGSGKGKTAGRGGKG.

It belongs to the universal ribosomal protein uL15 family. As to quaternary structure, part of the 50S ribosomal subunit.

Functionally, binds to the 23S rRNA. The polypeptide is Large ribosomal subunit protein uL15 (Rhodopseudomonas palustris (strain BisB18)).